The primary structure comprises 118 residues: Endoribonuclease MazF9 (118 aa).

It belongs to the PemK/MazF family. As to quaternary structure, forms a complex with cognate antitoxin MazE9.

Toxic component of a type II toxin-antitoxin (TA) system. Upon expression in E.coli and M.smegmatis inhibits cell growth and colony formation. Its toxic effect is neutralized by coexpression with cognate antitoxin MazE9. Acts as an mRNA interferase, specifically cleaving between U and C in UAC sequences. May cleave its cognate antitoxin's gene. In E.coli expression with non-cognate antitoxins VapB27 and VapB40 partially neutralizes the toxin. In Mycobacterium tuberculosis (strain ATCC 25618 / H37Rv), this protein is Endoribonuclease MazF9 (mazF9).